Here is a 506-residue protein sequence, read N- to C-terminus: Galactose/methyl galactoside import ATP-binding protein MglA (506 aa).

ABC transporter domains follow at residues leucine 14 to serine 249 and valine 264 to leucine 506. Residue glycine 46–serine 53 coordinates ATP.

This sequence belongs to the ABC transporter superfamily. Galactose/methyl galactoside importer (TC 3.A.1.2.3) family. In terms of assembly, the complex is composed of one ATP-binding protein (MglA), two transmembrane proteins (MglC) and a solute-binding protein (MglB).

It localises to the cell inner membrane. It carries out the reaction D-galactose(out) + ATP + H2O = D-galactose(in) + ADP + phosphate + H(+). It catalyses the reaction methyl beta-D-galactoside(out) + ATP + H2O = methyl beta-D-galactoside(in) + ADP + phosphate + H(+). Part of the ABC transporter complex MglABC involved in galactose/methyl galactoside import. Responsible for energy coupling to the transport system. The sequence is that of Galactose/methyl galactoside import ATP-binding protein MglA from Escherichia coli O157:H7.